Here is a 338-residue protein sequence, read N- to C-terminus: Ketol-acid reductoisomerase (NADP(+)) (338 aa).

The region spanning 1 to 181 is the KARI N-terminal Rossmann domain; the sequence is MKVFYDKDCD…GGGKAGIIET (181 aa). Residues 24–27, Arg-47, and Ser-52 contribute to the NADP(+) site; that span reads YGSQ. His-107 is a catalytic residue. Residue Gly-133 participates in NADP(+) binding. The KARI C-terminal knotted domain occupies 182 to 327; that stretch reads NFREETETDL…EKLRAMMPWI (146 aa). Mg(2+) contacts are provided by Asp-190, Glu-194, Glu-226, and Glu-230. Ser-251 serves as a coordination point for substrate.

Belongs to the ketol-acid reductoisomerase family. It depends on Mg(2+) as a cofactor.

The catalysed reaction is (2R)-2,3-dihydroxy-3-methylbutanoate + NADP(+) = (2S)-2-acetolactate + NADPH + H(+). It carries out the reaction (2R,3R)-2,3-dihydroxy-3-methylpentanoate + NADP(+) = (S)-2-ethyl-2-hydroxy-3-oxobutanoate + NADPH + H(+). It functions in the pathway amino-acid biosynthesis; L-isoleucine biosynthesis; L-isoleucine from 2-oxobutanoate: step 2/4. Its pathway is amino-acid biosynthesis; L-valine biosynthesis; L-valine from pyruvate: step 2/4. In terms of biological role, involved in the biosynthesis of branched-chain amino acids (BCAA). Catalyzes an alkyl-migration followed by a ketol-acid reduction of (S)-2-acetolactate (S2AL) to yield (R)-2,3-dihydroxy-isovalerate. In the isomerase reaction, S2AL is rearranged via a Mg-dependent methyl migration to produce 3-hydroxy-3-methyl-2-ketobutyrate (HMKB). In the reductase reaction, this 2-ketoacid undergoes a metal-dependent reduction by NADPH to yield (R)-2,3-dihydroxy-isovalerate. The protein is Ketol-acid reductoisomerase (NADP(+)) of Polaromonas sp. (strain JS666 / ATCC BAA-500).